The following is a 253-amino-acid chain: ATP synthase subunit b 2 (253 aa).

The chain crosses the membrane as a helical span at residues 9–27; it reads VLEIVNFLVLVWLLKRFLY.

This sequence belongs to the ATPase B chain family. In terms of assembly, F-type ATPases have 2 components, F(1) - the catalytic core - and F(0) - the membrane proton channel. F(1) has five subunits: alpha(3), beta(3), gamma(1), delta(1), epsilon(1). F(0) has three main subunits: a(1), b(2) and c(10-14). The alpha and beta chains form an alternating ring which encloses part of the gamma chain. F(1) is attached to F(0) by a central stalk formed by the gamma and epsilon chains, while a peripheral stalk is formed by the delta and b chains.

It localises to the cell inner membrane. Its function is as follows. F(1)F(0) ATP synthase produces ATP from ADP in the presence of a proton or sodium gradient. F-type ATPases consist of two structural domains, F(1) containing the extramembraneous catalytic core and F(0) containing the membrane proton channel, linked together by a central stalk and a peripheral stalk. During catalysis, ATP synthesis in the catalytic domain of F(1) is coupled via a rotary mechanism of the central stalk subunits to proton translocation. Functionally, component of the F(0) channel, it forms part of the peripheral stalk, linking F(1) to F(0). This chain is ATP synthase subunit b 2, found in Methylococcus capsulatus (strain ATCC 33009 / NCIMB 11132 / Bath).